A 278-amino-acid polypeptide reads, in one-letter code: Ankyrin repeat and SOCS box protein 13 (278 aa).

ANK repeat units lie at residues 18-47 (VERTPVHEAAQRGESLQLQQLIESGACVNQ), 51-80 (DSITPLHAASLQGQARCVQLLLAAGAQVDA), 84-113 (DGSTPLCDACASGSIECVKLLLSYGAKVNP), 116-145 (YTASPLHEACMSGSSECVRLLIDVGANLEA), 149-178 (HFGTPLHVACAREHLDCVKVLLNAGANVNA), and 181-210 (LHETALHHAAKVKNVDLIEMLIEFGGNIYA). The SOCS box domain maps to 229-278 (AKCFEYYEKTPLTLSQLCRVNLRKATGVRGLEKIAKLNIPPRLIDYLSYN).

Belongs to the ankyrin SOCS box (ASB) family.

The protein operates within protein modification; protein ubiquitination. In terms of biological role, may be a substrate-recognition component of a SCF-like ECS (Elongin-Cullin-SOCS-box protein) E3 ubiquitin-protein ligase complex which mediates the ubiquitination and subsequent proteasomal degradation of target proteins. This Homo sapiens (Human) protein is Ankyrin repeat and SOCS box protein 13 (ASB13).